Reading from the N-terminus, the 1076-residue chain is Structural maintenance of chromosomes protein 5 (1076 aa).

49 to 56 (GHNGSGKS) is an ATP binding site. The stretch at 190–415 (STSIEDKCTT…KRDEEQNSQL (226 aa)) forms a coiled coil. The span at 375 to 410 (EQKYSTAERDSRQEEDAIQKKSYEMRQLENKKRDEE) shows a compositional bias: basic and acidic residues. A disordered region spans residues 375–420 (EQKYSTAERDSRQEEDAIQKKSYEMRQLENKKRDEEQNSQLNRQDR). Residues 416–617 (NRQDRYRVLQ…ANTWRDQFFK (202 aa)) form a flexible hinge region. 2 coiled-coil regions span residues 627 to 713 (NSIL…EKKA) and 749 to 786 (KSRVNKSNSEAETHRSKLEDLKSVKDAAEDLLKTALNH).

The protein belongs to the SMC family. SMC5 subfamily. Interacts with smc-6. In terms of tissue distribution, expressed in the germline (at protein level).

The protein resides in the nucleus. The protein localises to the chromosome. Functionally, core component of the smc-5/smc-6 complex. Functions in DNA double strand break repair by promoting sister-chromatid homologous recombination during meiosis. Acts in a DNA repair pathway for removal of ionizing radiation- and ultraviolet (UV) radiation-induced DNA lesions that is distinct from classical nucleotide excision repair and the translesion synthesis pathway. Also involved in the recovery of stalled replication forks. The protein is Structural maintenance of chromosomes protein 5 of Caenorhabditis elegans.